Reading from the N-terminus, the 253-residue chain is Phosphoglycerate mutase 2 (253 aa).

At Thr-3 the chain carries Phosphothreonine. Substrate is bound by residues 10–17 (RHGESTWN), 23–24 (CG), Arg-62, 89–92 (ERHY), Lys-100, and 116–117 (RR). His-11 (tele-phosphohistidine intermediate) is an active-site residue. Ser-14 carries the post-translational modification Phosphoserine. Glu-89 acts as the Proton donor/acceptor in catalysis. The residue at position 118 (Ser-118) is a Phosphoserine. Tyr-132 and Tyr-133 each carry phosphotyrosine. A Phosphoserine modification is found at Ser-135. At Thr-152 the chain carries Phosphothreonine. Position 187–188 (187–188 (GN)) interacts with substrate.

The protein belongs to the phosphoglycerate mutase family. BPG-dependent PGAM subfamily. As to quaternary structure, homodimer.

It carries out the reaction (2R)-2-phosphoglycerate = (2R)-3-phosphoglycerate. It catalyses the reaction (2R)-3-phospho-glyceroyl phosphate = (2R)-2,3-bisphosphoglycerate + H(+). In terms of biological role, interconversion of 3- and 2-phosphoglycerate with 2,3-bisphosphoglycerate as the primer of the reaction. Can also catalyze the reaction of EC 5.4.2.4 (synthase), but with a reduced activity. The chain is Phosphoglycerate mutase 2 (PGAM2) from Bos taurus (Bovine).